The sequence spans 490 residues: GTPase Der (490 aa).

2 consecutive EngA-type G domains span residues 1–165 (MRIA…QIPV) and 227–400 (LKVA…TIAT). GTP-binding positions include 7-14 (GRPNVGKS), 54-58 (DTGGV), 117-120 (NKAD), 233-240 (GHPNVGKS), 280-284 (DTAGL), and 345-348 (NKWD). One can recognise a KH-like domain in the interval 401–485 (TKLSTSLVNK…PFDLEYKAKP (85 aa)).

The protein belongs to the TRAFAC class TrmE-Era-EngA-EngB-Septin-like GTPase superfamily. EngA (Der) GTPase family. Associates with the 50S ribosomal subunit.

Functionally, GTPase that plays an essential role in the late steps of ribosome biogenesis. This is GTPase Der from Chlamydia trachomatis serovar A (strain ATCC VR-571B / DSM 19440 / HAR-13).